A 507-amino-acid polypeptide reads, in one-letter code: Efflux pump ustT (507 aa).

11 helical membrane passes run 59–79, 146–166, 180–200, 216–236, 240–260, 316–336, 359–379, 398–418, 421–441, 449–469, and 481–501; these read IAVV…IIVA, LLIA…VTWF, IWQL…AMIA, HAAV…LANF, IPVF…YVVV, VLLI…SGIT, AGVN…ILVK, VCLI…TLVF, TVFA…TGMV, VFTG…PMLA, and IWVG…LGAI.

This sequence belongs to the major facilitator superfamily.

Its subcellular location is the cell membrane. The protein operates within mycotoxin biosynthesis. Its function is as follows. Efflux pump; part of the gene cluster that mediates the biosynthesis of the secondary metabolite ustiloxin B, an antimitotic tetrapeptide. Probably involved in self-resistance through the export of ustiloxin B. The polypeptide is Efflux pump ustT (Aspergillus flavus (strain ATCC 200026 / FGSC A1120 / IAM 13836 / NRRL 3357 / JCM 12722 / SRRC 167)).